The following is a 48-amino-acid chain: MPQLVPFYFMNQLTYGFLLMITLLILFSQFFLPMILRLYVSRLFISKL.

The chain crosses the membrane as a helical span at residues 13–32 (LTYGFLLMITLLILFSQFFL).

This sequence belongs to the ATPase protein 8 family. As to quaternary structure, F-type ATPases have 2 components, CF(1) - the catalytic core - and CF(0) - the membrane proton channel. In yeast, the dimeric form of ATP synthase consists of 17 polypeptides: alpha, beta, gamma, delta, epsilon, 4 (B), 5 (OSCP), 6 (A), 8, 9 (C), d, E (Tim11), f, g, h, i/j and k.

The protein localises to the mitochondrion membrane. Functionally, mitochondrial membrane ATP synthase (F(1)F(0) ATP synthase or Complex V) produces ATP from ADP in the presence of a proton gradient across the membrane which is generated by electron transport complexes of the respiratory chain. F-type ATPases consist of two structural domains, F(1) - containing the extramembraneous catalytic core and F(0) - containing the membrane proton channel, linked together by a central stalk and a peripheral stalk. During catalysis, ATP synthesis in the catalytic domain of F(1) is coupled via a rotary mechanism of the central stalk subunits to proton translocation. Part of the complex F(0) domain. Minor subunit located with subunit a in the membrane. The polypeptide is ATP synthase protein 8 (ATP8) (Saccharomyces cerevisiae (strain ATCC 204508 / S288c) (Baker's yeast)).